Consider the following 1310-residue polypeptide: Major viral transcription factor ICP4 homolog (1310 aa).

Disordered regions lie at residues 117-271, 285-454, and 636-697; these read AGAR…GPVE, GAKA…TPII, and GSSP…LLDK. Residues 341-350 show a composition bias toward basic and acidic residues; it reads PVEKKPKSRE. 3 stretches are compositionally biased toward low complexity: residues 351–364, 392–407, and 648–666; these read FVSSSSSSSSWGSS, PSPSNSDDSDSNDGGS, and PSPTTPATQAPDPQPSAAA. The Nuclear localization signal motif lies at 677 to 685; the sequence is RLRTPRKRK. Ser-686 and Ser-722 each carry phosphoserine; by viral VZV ORF66. Disordered regions lie at residues 1193–1258 and 1282–1310; these read GTRF…SFGV and ELLSSSSSSEDEDDVWGGRGGRSPPQSRG. Residues 1217–1227 are compositionally biased toward basic and acidic residues; sequence RTADDREHALE. Over residues 1228–1250 the composition is skewed to acidic residues; it reads LDDWEVGCEDAWDSEEGGGDDGD.

Belongs to the herpesviridae ICP4 family. As to quaternary structure, interacts with IE4 and IE63. Interacts with host USF1 and SP1. Phosphorylated by ORF66 protein kinase on Ser-686 and Ser-722. Also phosphorylated by ORF47 protein kinase and by human CSNK2A1/CKII.

Its subcellular location is the host nucleus. It localises to the host cytoplasm. It is found in the virion tegument. Its function is as follows. Transcriptional transactivator. May interact with and recruit specific components of the general transcription machinery to viral promoters and stabilize their formation for transcription initiation. Negatively regulates its own transcription. This immediate early (EI) protein may be necessary in virion for viral pathogenesis. The sequence is that of Major viral transcription factor ICP4 homolog from Homo sapiens (Human).